A 580-amino-acid polypeptide reads, in one-letter code: Long-chain-fatty-acid--AMP ligase FadD28 (580 aa).

Residues 421–440 (SERTFGGKIVTPSPGTPEGP) are disordered.

Belongs to the ATP-dependent AMP-binding enzyme family.

It catalyses the reaction holo-[mycocerosate synthase] + a long-chain fatty acid + ATP = a long-chain fatty acyl-[mycocerosate synthase] + AMP + diphosphate. It carries out the reaction a long-chain fatty acid + ATP + H(+) = a long-chain fatty acyl-AMP + diphosphate. The catalysed reaction is holo-[mycocerosate synthase] + a long-chain fatty acyl-AMP = a long-chain fatty acyl-[mycocerosate synthase] + AMP + H(+). Its pathway is lipid metabolism; fatty acid biosynthesis. Involved in the biosynthesis of phthiocerol dimycocerosate (PDIM), a cell wall-associated lipid found only in pathogenic mycobacteria. Catalyzes the activation of long-chain fatty acids as acyl-adenylates (acyl-AMP), which are then transferred to the multifunctional polyketide synthase Mas for further chain extension. The chain is Long-chain-fatty-acid--AMP ligase FadD28 (fadD28) from Mycobacterium bovis (strain ATCC BAA-935 / AF2122/97).